An 85-amino-acid chain; its full sequence is uncharacterized protein (85 aa).

This is an uncharacterized protein from Fowlpox virus (strain NVSL) (FPV).